Reading from the N-terminus, the 79-residue chain is Dicentracin (79 aa).

The signal sequence occupies residues 1-22; that stretch reads MKCATLFLVLSMVVLMAEPGDA. Glycine amide is present on glycine 44. The propeptide occupies 47–79; the sequence is AQQDQQDQQYQQDQQDQQAEQYQRFNRERAAFD. Residues 48–67 are disordered; that stretch reads QQDQQDQQYQQDQQDQQAEQ.

Belongs to the pleurocidin family.

The protein resides in the secreted. The chain is Dicentracin from Dicentrarchus labrax (European seabass).